The sequence spans 366 residues: NADH-quinone oxidoreductase subunit D (366 aa).

This sequence belongs to the complex I 49 kDa subunit family. As to quaternary structure, NDH-1 is composed of 14 different subunits. Subunits NuoB, C, D, E, F, and G constitute the peripheral sector of the complex.

The protein localises to the cell membrane. The enzyme catalyses a quinone + NADH + 5 H(+)(in) = a quinol + NAD(+) + 4 H(+)(out). In terms of biological role, NDH-1 shuttles electrons from NADH, via FMN and iron-sulfur (Fe-S) centers, to quinones in the respiratory chain. The immediate electron acceptor for the enzyme in this species is believed to be a menaquinone. Couples the redox reaction to proton translocation (for every two electrons transferred, four hydrogen ions are translocated across the cytoplasmic membrane), and thus conserves the redox energy in a proton gradient. The chain is NADH-quinone oxidoreductase subunit D from Bacillus cereus (strain ATCC 10987 / NRS 248).